A 367-amino-acid polypeptide reads, in one-letter code: MEHGLRSIPAWTLDKFIEDYLLPDTTFGADVKSAVNVVCDFLKERCFQGAAHPVRVSKVVKGGSSGKGTTLKGKSDADLVVFLNNLTSFEDQLNRRGEFIKEIKKQLYEVQHERRFRVKFEVQSSWWPNARSLSFKLSAPHLHQEVEFDVLPAFDVLGHVNTSSKPDPRIYAILIEECTSLGKDGEFSTCFTELQRNFLKQRPTKLKSLIRLVKHWYQLCKEKLGKPLPPQYALELLTVFAWEQGNGCYEFNTAQGFRTVLELVINYQHLRIYWTKYYDFQHQEVSKYLHRQLRKARPVILDPADPTGNVAGGNPEGWRRLAEEADVWLWYPCFIKKDGSRVSSWDVPTVVPVPFEQVEENWTCILL.

Residues 14–61 (DKFIEDYLLPDTTFGADVKSAVNVVCDFLKERCFQGAAHPVRVSKVVK) are interaction with dsRNA. Residue serine 64 coordinates ATP. Mg(2+) is bound by residues aspartate 76, aspartate 78, and aspartate 149. The interval 201–211 (QRPTKLKSLIR) is interaction with dsRNA. Residues arginine 211, lysine 214, and glutamine 231 each coordinate ATP. The S-geranylgeranyl cysteine moiety is linked to residue cysteine 364.

This sequence belongs to the 2-5A synthase family. As to quaternary structure, monomer. Homotetramer. Interacts with OAS1D; the interaction inhibits OAS1A catalytic activity. It depends on Mg(2+) as a cofactor. Post-translationally, C-terminal prenylated. In terms of tissue distribution, expressed in oocytes and granulosa cells of ovary, in intestine, stomach, spleen and uterus (at protein level). Expressed at high levels in the digestive tract and lymphoid organs. Expressed in ovary and spleen.

The protein resides in the cytoplasm. The protein localises to the mitochondrion. Its subcellular location is the nucleus. It is found in the microsome. It localises to the endoplasmic reticulum. The catalysed reaction is 3 ATP = 5'-triphosphoadenylyl-(2'-&gt;5')-adenylyl-(2'-&gt;5')-adenosine + 2 diphosphate. Its activity is regulated as follows. Produced as a latent enzyme which is activated by dsRNA generated during the course of viral infection. The dsRNA activator must be at least 15 nucleotides long, and no modification of the 2'-hydroxyl group is tolerated. ssRNA or dsDNA do not act as activators. In terms of biological role, interferon-induced, dsRNA-activated antiviral enzyme which plays a critical role in cellular innate antiviral response. In addition, it may also play a role in other cellular processes such as apoptosis, cell growth, differentiation and gene regulation. Synthesizes higher oligomers of 2'-5'-oligoadenylates (2-5A) from ATP which then bind to the inactive monomeric form of ribonuclease L (RNase L) leading to its dimerization and subsequent activation. Activation of RNase L leads to degradation of cellular as well as viral RNA, resulting in the inhibition of protein synthesis, thus terminating viral replication. Can mediate the antiviral effect via the classical RNase L-dependent pathway or an alternative antiviral pathway independent of RNase L. This is 2'-5'-oligoadenylate synthase 1A (Oas1a) from Mus musculus (Mouse).